The sequence spans 614 residues: DBH-like monooxygenase protein 1 homolog (614 aa).

The signal sequence occupies residues 1–22 (MSENKLFCAIVFLTSLFCSTCS). Topologically, residues 23-593 (QGTRFVHSAA…CRKDSAIQCE (571 aa)) are lumenal. Positions 37–150 (RRYNIKWGFD…STVRVIWAFH (114 aa)) constitute a DOMON domain. Asn116 is a glycosylation site (N-linked (GlcNAc...) asparagine). Tyr205 is a catalytic residue. Cystine bridges form between Cys207–Cys259 and Cys244–Cys271. 2 residues coordinate Cu cation: His237 and His238. An N-linked (GlcNAc...) asparagine glycan is attached at Asn249. 3 residues coordinate Cu cation: His309, His391, and His393. 3 cysteine pairs are disulfide-bonded: Cys366–Cys482, Cys370–Cys552, and Cys445–Cys467. Residue His391 is part of the active site. N-linked (GlcNAc...) asparagine glycosylation occurs at Asn454. Met466 serves as a coordination point for Cu cation. N-linked (GlcNAc...) asparagine glycosylation occurs at Asn519. The chain crosses the membrane as a helical span at residues 594–612 (HSLALLLTACLLLILQTCL).

Belongs to the copper type II ascorbate-dependent monooxygenase family. The cofactor is Cu(2+).

The protein resides in the endoplasmic reticulum membrane. In Danio rerio (Zebrafish), this protein is DBH-like monooxygenase protein 1 homolog (moxd1).